A 265-amino-acid polypeptide reads, in one-letter code: Triosephosphate isomerase (265 aa).

8–10 (NWK) is a binding site for substrate. The active-site Electrophile is histidine 103. The Proton acceptor role is filled by glutamate 182. Substrate-binding positions include glycine 188, serine 226, and 247-248 (GG).

Belongs to the triosephosphate isomerase family. Homodimer.

Its subcellular location is the cytoplasm. It carries out the reaction D-glyceraldehyde 3-phosphate = dihydroxyacetone phosphate. It participates in carbohydrate biosynthesis; gluconeogenesis. Its pathway is carbohydrate degradation; glycolysis; D-glyceraldehyde 3-phosphate from glycerone phosphate: step 1/1. Involved in the gluconeogenesis. Catalyzes stereospecifically the conversion of dihydroxyacetone phosphate (DHAP) to D-glyceraldehyde-3-phosphate (G3P). This Psychrobacter sp. (strain PRwf-1) protein is Triosephosphate isomerase.